We begin with the raw amino-acid sequence, 448 residues long: Antizyme inhibitor 1 (448 aa).

The protein belongs to the Orn/Lys/Arg decarboxylase class-II family. ODC antizyme inhibitor subfamily. In terms of assembly, monomer. Interacts with OAZ1 and OAZ3; this interaction disrupts the interaction between the antizyme and ODC1. Ubiquitinated, leading to its proteasomal degradation; a process that is reduced in presence of antizyme OAZ1.

The protein resides in the nucleus. Antizyme inhibitor (AZI) protein that positively regulates ornithine decarboxylase (ODC) activity and polyamine uptake. AZI is an enzymatically inactive ODC homolog that counteracts the negative effect of ODC antizymes (AZs) OAZ1, OAZ2 and OAZ3 on ODC activity by competing with ODC for antizyme-binding. Inhibits antizyme-dependent ODC degradation and releases ODC monomers from their inactive complex with antizymes, leading to formation of the catalytically active ODC homodimer and restoring polyamine production. The sequence is that of Antizyme inhibitor 1 (AZIN1) from Pongo abelii (Sumatran orangutan).